Here is a 245-residue protein sequence, read N- to C-terminus: 1-(5-phosphoribosyl)-5-[(5-phosphoribosylamino)methylideneamino] imidazole-4-carboxamide isomerase (245 aa).

Catalysis depends on aspartate 7, which acts as the Proton acceptor. The active-site Proton donor is aspartate 129.

The protein belongs to the HisA/HisF family.

Its subcellular location is the cytoplasm. The catalysed reaction is 1-(5-phospho-beta-D-ribosyl)-5-[(5-phospho-beta-D-ribosylamino)methylideneamino]imidazole-4-carboxamide = 5-[(5-phospho-1-deoxy-D-ribulos-1-ylimino)methylamino]-1-(5-phospho-beta-D-ribosyl)imidazole-4-carboxamide. Its pathway is amino-acid biosynthesis; L-histidine biosynthesis; L-histidine from 5-phospho-alpha-D-ribose 1-diphosphate: step 4/9. The polypeptide is 1-(5-phosphoribosyl)-5-[(5-phosphoribosylamino)methylideneamino] imidazole-4-carboxamide isomerase (Aliivibrio fischeri (strain ATCC 700601 / ES114) (Vibrio fischeri)).